The following is a 3459-amino-acid chain: uncharacterized protein (3459 aa).

Positions 158–167 (NDDDWIFNED) are enriched in acidic residues. 2 disordered regions span residues 158-230 (NDDD…NNNN) and 400-447 (YGYI…NDEK). Residues 168-184 (DEKKNKNNDGNDNRYDY) show a composition bias toward basic and acidic residues. Residues 185-201 (NDLQNNNNNDNNKYDYN) show a composition bias toward low complexity. The span at 204–221 (DDEKKNKNNDGDDNKYDY) shows a compositional bias: basic and acidic residues. The segment covering 406–443 (DNDDGDDYNDDNDNDDNYNDDNYNDDNYNDDNYNDDNY) has biased composition (acidic residues). Positions 771–851 (VNEKKKGENE…NEMNKDEENE (81 aa)) form a coiled coil. Residues 1059–1079 (LIYMIYLFFTYKKYDLLLMFI) traverse the membrane as a helical segment. Disordered stretches follow at residues 1148–1187 (RRQE…NDYD), 1399–1467 (IPTQ…NDDD), and 1711–1733 (QKKK…NKEN). Over residues 1404–1463 (DKNETDEGNKNETDEGDKNETDEGDKNETDEGNKNETEEIYKNETDEGNKNETEEIYKND) the composition is skewed to basic and acidic residues. Helical transmembrane passes span 2059 to 2079 (FLLF…IFFF) and 2197 to 2217 (IIQC…DFLF). Disordered regions lie at residues 2582-2644 (IYKD…DNNN) and 2776-2835 (GRIW…DKGD). Acidic residues predominate over residues 2592 to 2629 (DNNDDDNINDDDNINDDDNINDDDNNNDDDNNNDDNND). Basic and acidic residues predominate over residues 2779–2821 (WKREENGEKKKNEKNESEKNERNEKNEKNEKHEKHEKHEKNEK). Residues 2785-2820 (GEKKKNEKNESEKNERNEKNEKNEKHEKHEKHEKNE) are a coiled coil. The next 2 helical transmembrane spans lie at 3229-3249 (LFII…SFIL) and 3296-3316 (LLFF…NINS).

It is found in the membrane. This is an uncharacterized protein from Plasmodium falciparum (isolate 3D7).